A 209-amino-acid chain; its full sequence is Outer-membrane lipoprotein carrier protein (209 aa).

The N-terminal stretch at 1–21 is a signal peptide; that stretch reads MKLLKLLSVAALSAASMMANA.

The protein belongs to the LolA family. Monomer.

The protein resides in the periplasm. Its function is as follows. Participates in the translocation of lipoproteins from the inner membrane to the outer membrane. Only forms a complex with a lipoprotein if the residue after the N-terminal Cys is not an aspartate (The Asp acts as a targeting signal to indicate that the lipoprotein should stay in the inner membrane). In Hahella chejuensis (strain KCTC 2396), this protein is Outer-membrane lipoprotein carrier protein.